Consider the following 1191-residue polypeptide: WASH complex subunit homolog 5 (1191 aa).

Belongs to the strumpellin family. In terms of assembly, component of the WASH complex.

Its subcellular location is the early endosome. Functionally, acts at least in part as component of the WASH complex which may regulate wash nucleation-promoting factor (NPF) activity and is required for its membrane targeting during endosomal sorting. During embryogenesis, not involved in the wash-dependent developmental migration of hemocytes anteriorly from the tail. This chain is WASH complex subunit homolog 5, found in Drosophila melanogaster (Fruit fly).